The primary structure comprises 1036 residues: Protein smoothened (1036 aa).

An N-terminal signal peptide occupies residues 1–31 (MQYLNFPRMPNIMMFLEVAILCLWVVADASA). Over 32-258 (SSAKFGSTTP…DDEHRQIHKL (227 aa)) the chain is Extracellular. N55 and N95 each carry an N-linked (GlcNAc...) asparagine glycan. The region spanning 85 to 206 (VRRARCYPTS…TLFPTKCTNG (122 aa)) is the FZ domain. 4 disulfide bridges follow: C90–C155, C100–C148, C139–C179, and C172–C194. N-linked (GlcNAc...) asparagine glycans are attached at residues N184, N195, and N213. 2 cysteine pairs are disulfide-bonded: C218-C238 and C242-C320. The chain crosses the membrane as a helical span at residues 259–279 (IGWAGSICLLSNLFVVSTFFI). Over 280–287 (DWKNANKY) the chain is Cytoplasmic. A helical transmembrane segment spans residues 288–308 (PAVIVFYINLCFLIACVGWLL). Topologically, residues 309-339 (QFTSGSREDIVCRKDGTLRHSEPTAGENLSC) are extracellular. N336 is a glycosylation site (N-linked (GlcNAc...) asparagine). An intrachain disulfide couples C339 to C413. Residues 340 to 360 (IVIFVLVYYFLTAGMVWFVFL) traverse the membrane as a helical segment. Residues 361 to 381 (TYAWHWRAMGHVQDRIDKKGS) lie on the Cytoplasmic side of the membrane. A helical membrane pass occupies residues 382–402 (YFHLVAWSLPLVLTITTMAFS). Topologically, residues 403–421 (EVDGNSIVGICFVGYINHS) are extracellular. N-linked (GlcNAc...) asparagine glycosylation is present at N419. The chain crosses the membrane as a helical span at residues 422 to 442 (MRAGLLLGPLCGVILIGGYFI). The Cytoplasmic segment spans residues 443–469 (TRGMVMLFGLKHFANDIKSTSASNKIH). A helical membrane pass occupies residues 470 to 490 (LIIMRMGVCALLTLVFILVAI). Residues 491 to 532 (ACHVTEFRHADEWAQSFRQFIICKISSVFEEKSSCRIENRPS) are Extracellular-facing. Cysteines 513 and 525 form a disulfide. The chain crosses the membrane as a helical span at residues 533–553 (VGVLQLHLLCLFSSGIVMSTW). The Cytoplasmic segment spans residues 554–1036 (CWTPSSIETW…KLKMLLLPSK (483 aa)). Phosphoserine is present on residues S658, S659, S667, S670, S673, S687, S690, and S693. Disordered stretches follow at residues 678-745 (HVSV…TSVE) and 870-902 (IKKS…KNPA). Positions 880 to 899 (RHSRNSARSQSKKSQKRHLK) are enriched in basic residues.

Belongs to the G-protein coupled receptor Fz/Smo family. In terms of assembly, interacts with cos. Post-translationally, phosphorylation by CkIalpha and PKA regulates smo accumulation at the cell surface and its signaling activity in response to hh. In terms of tissue distribution, expressed in olfactory sensory neurons (at protein level).

It is found in the cell membrane. The protein resides in the cell projection. It localises to the cilium. In terms of biological role, segment polarity protein required for correct patterning of every segment. G protein-coupled receptor which associates with the patched protein (ptc) to transduce the hedgehog (hh) signal through the activation of an inhibitory G-protein. In the absence of hh, ptc represses the constitutive signaling activity of smo through fused (fu). Essential component of a hh-signaling pathway which regulates the Duox-dependent gut immune response to bacterial uracil; required to activate Cad99C-dependent endosome formation, norpA-dependent Ca2+ mobilization and p38 MAPK, which are essential steps in the Duox-dependent production of reactive oxygen species (ROS) in response to intestinal bacterial infection. In Drosophila melanogaster (Fruit fly), this protein is Protein smoothened (smo).